Reading from the N-terminus, the 63-residue chain is UPF0512 protein X (63 aa).

The protein belongs to the UPF0512 family.

The polypeptide is UPF0512 protein X (Dictyostelium discoideum (Social amoeba)).